Consider the following 318-residue polypeptide: Acetyl-coenzyme A carboxylase carboxyl transferase subunit alpha (318 aa).

Residues 41–295 (HLEKKNEELT…KQRILTDLNE (255 aa)) enclose the CoA carboxyltransferase C-terminal domain.

It belongs to the AccA family. In terms of assembly, acetyl-CoA carboxylase is a heterohexamer composed of biotin carboxyl carrier protein (AccB), biotin carboxylase (AccC) and two subunits each of ACCase subunit alpha (AccA) and ACCase subunit beta (AccD).

It localises to the cytoplasm. It carries out the reaction N(6)-carboxybiotinyl-L-lysyl-[protein] + acetyl-CoA = N(6)-biotinyl-L-lysyl-[protein] + malonyl-CoA. The protein operates within lipid metabolism; malonyl-CoA biosynthesis; malonyl-CoA from acetyl-CoA: step 1/1. Functionally, component of the acetyl coenzyme A carboxylase (ACC) complex. First, biotin carboxylase catalyzes the carboxylation of biotin on its carrier protein (BCCP) and then the CO(2) group is transferred by the carboxyltransferase to acetyl-CoA to form malonyl-CoA. The sequence is that of Acetyl-coenzyme A carboxylase carboxyl transferase subunit alpha from Tolumonas auensis (strain DSM 9187 / NBRC 110442 / TA 4).